Reading from the N-terminus, the 126-residue chain is Methylglyoxal synthase (126 aa).

One can recognise an MGS-like domain in the interval 1–126 (MEKKIALIAH…LIKGLESLIF (126 aa)). Residues His10, Lys14, 36–39 (TGTT), and 56–57 (SG) contribute to the substrate site. Residue Asp62 is the Proton donor/acceptor of the active site. A substrate-binding site is contributed by His89.

It belongs to the methylglyoxal synthase family.

The enzyme catalyses dihydroxyacetone phosphate = methylglyoxal + phosphate. Catalyzes the formation of methylglyoxal from dihydroxyacetone phosphate. This is Methylglyoxal synthase from Borreliella burgdorferi (strain ATCC 35210 / DSM 4680 / CIP 102532 / B31) (Borrelia burgdorferi).